A 177-amino-acid chain; its full sequence is Dihydrofolate reductase type 9 (177 aa).

Residues 3-167 (SLNMIVAVNK…TKLIFQIWIN (165 aa)) enclose the DHFR domain.

The protein belongs to the dihydrofolate reductase family. In terms of assembly, homodimer.

It catalyses the reaction (6S)-5,6,7,8-tetrahydrofolate + NADP(+) = 7,8-dihydrofolate + NADPH + H(+). It participates in cofactor biosynthesis; tetrahydrofolate biosynthesis; 5,6,7,8-tetrahydrofolate from 7,8-dihydrofolate: step 1/1. In terms of biological role, key enzyme in folate metabolism. Catalyzes an essential reaction for de novo glycine and purine synthesis, and for DNA precursor synthesis. The protein is Dihydrofolate reductase type 9 (dhfrIX) of Escherichia coli.